We begin with the raw amino-acid sequence, 361 residues long: Tyrosine--tRNA ligase (361 aa).

L-tyrosine is bound by residues tyrosine 36, tyrosine 162, glutamine 166, aspartate 169, and glutamine 184. The 'KMSKS' region signature appears at 236–240 (KMSKS). Residue lysine 239 participates in ATP binding.

This sequence belongs to the class-I aminoacyl-tRNA synthetase family. TyrS type 4 subfamily. In terms of assembly, homodimer.

It localises to the cytoplasm. It catalyses the reaction tRNA(Tyr) + L-tyrosine + ATP = L-tyrosyl-tRNA(Tyr) + AMP + diphosphate + H(+). Functionally, catalyzes the attachment of tyrosine to tRNA(Tyr) in a two-step reaction: tyrosine is first activated by ATP to form Tyr-AMP and then transferred to the acceptor end of tRNA(Tyr). The protein is Tyrosine--tRNA ligase of Saccharolobus islandicus (strain L.S.2.15 / Lassen #1) (Sulfolobus islandicus).